Consider the following 246-residue polypeptide: Cell division protein ZapD (246 aa).

This sequence belongs to the ZapD family. In terms of assembly, interacts with FtsZ.

It localises to the cytoplasm. Cell division factor that enhances FtsZ-ring assembly. Directly interacts with FtsZ and promotes bundling of FtsZ protofilaments, with a reduction in FtsZ GTPase activity. The sequence is that of Cell division protein ZapD from Vibrio parahaemolyticus serotype O3:K6 (strain RIMD 2210633).